The primary structure comprises 112 residues: Small ribosomal subunit protein bS6 (112 aa).

Belongs to the bacterial ribosomal protein bS6 family.

Its function is as follows. Binds together with bS18 to 16S ribosomal RNA. The protein is Small ribosomal subunit protein bS6 of Legionella pneumophila (strain Paris).